The primary structure comprises 504 residues: Sperm motility kinase 2A (504 aa).

The Protein kinase domain occupies 28 to 276 (YEMLGTIGHG…VAEVMMHPWV (249 aa)). ATP contacts are provided by residues 34–42 (IGHGGSTKV) and Lys-57. Residue Asp-147 is the Proton acceptor of the active site. The UBA domain maps to 294–334 (KPDPAIVKAMGHIGFQAQDIEDSLRQRKFNETMASYCLLKK). Polar residues-rich tracts occupy residues 376-393 (PTSL…CGRS) and 443-454 (SDESTEGHTSAS). Disordered regions lie at residues 376–403 (PTSL…RSFS) and 443–469 (SDES…PRGI).

The protein belongs to the protein kinase superfamily. CAMK Ser/Thr protein kinase family. Smok subfamily. As to expression, testis-specific. Expressed in the testis from 22 days postpartum (22 dpp).

The catalysed reaction is L-seryl-[protein] + ATP = O-phospho-L-seryl-[protein] + ADP + H(+). It catalyses the reaction L-threonyl-[protein] + ATP = O-phospho-L-threonyl-[protein] + ADP + H(+). Functionally, may play a role in sperm motility, especially in the regulation of flagellar function. This Mus musculus (Mouse) protein is Sperm motility kinase 2A (Smok2a).